Consider the following 452-residue polypeptide: Chromosomal replication initiator protein DnaA (452 aa).

A domain I, interacts with DnaA modulators region spans residues 1-85 (MSTTAWQKCL…IEVGSKPVEA (85 aa)). The interval 85 to 115 (AVDTPAETIVTSSSTAPLKSAPKKAVDYKSS) is domain II. The tract at residues 116–332 (HLNKKFVFDS…GALRRVIANA (217 aa)) is domain III, AAA+ region. 4 residues coordinate ATP: Gly160, Gly162, Lys163, and Thr164. The tract at residues 333–452 (HFTGKPITIE…YKNLMRILSS (120 aa)) is domain IV, binds dsDNA.

Belongs to the DnaA family. As to quaternary structure, oligomerizes as a right-handed, spiral filament on DNA at oriC.

Its subcellular location is the cytoplasm. Plays an essential role in the initiation and regulation of chromosomal replication. ATP-DnaA binds to the origin of replication (oriC) to initiate formation of the DNA replication initiation complex once per cell cycle. Binds the DnaA box (a 9 base pair repeat at the origin) and separates the double-stranded (ds)DNA. Forms a right-handed helical filament on oriC DNA; dsDNA binds to the exterior of the filament while single-stranded (ss)DNA is stabiized in the filament's interior. The ATP-DnaA-oriC complex binds and stabilizes one strand of the AT-rich DNA unwinding element (DUE), permitting loading of DNA polymerase. After initiation quickly degrades to an ADP-DnaA complex that is not apt for DNA replication. Binds acidic phospholipids. The chain is Chromosomal replication initiator protein DnaA from Legionella pneumophila (strain Paris).